Reading from the N-terminus, the 283-residue chain is Pantothenate synthetase 2 (283 aa).

34–41 (MGALHDGH) contacts ATP. Residue His41 is the Proton donor of the active site. Gln65 contacts (R)-pantoate. Residue Gln65 coordinates beta-alanine. Position 152–155 (152–155 (GEKD)) interacts with ATP. Gln158 lines the (R)-pantoate pocket. ATP contacts are provided by residues Val181 and 189 to 192 (MSSR).

This sequence belongs to the pantothenate synthetase family. Homodimer.

It is found in the cytoplasm. The enzyme catalyses (R)-pantoate + beta-alanine + ATP = (R)-pantothenate + AMP + diphosphate + H(+). Its pathway is cofactor biosynthesis; (R)-pantothenate biosynthesis; (R)-pantothenate from (R)-pantoate and beta-alanine: step 1/1. Its function is as follows. Catalyzes the condensation of pantoate with beta-alanine in an ATP-dependent reaction via a pantoyl-adenylate intermediate. The polypeptide is Pantothenate synthetase 2 (Bradyrhizobium diazoefficiens (strain JCM 10833 / BCRC 13528 / IAM 13628 / NBRC 14792 / USDA 110)).